Consider the following 319-residue polypeptide: G-protein coupled receptor 171 (319 aa).

Over Met-1 to Phe-21 the chain is Extracellular. An N-linked (GlcNAc...) asparagine glycan is attached at Asn-3. The chain crosses the membrane as a helical span at residues Tyr-22–Lys-42. Over Asn-43–Cys-48 the chain is Cytoplasmic. A helical membrane pass occupies residues Val-49 to Val-69. The Extracellular portion of the chain corresponds to Lys-70–Val-89. Residues Thr-90–Ile-110 form a helical membrane-spanning segment. Residues Asp-111–Lys-132 lie on the Cytoplasmic side of the membrane. The helical transmembrane segment at Met-133–Pro-153 threads the bilayer. Residues Ile-154–Asn-181 lie on the Extracellular side of the membrane. The chain crosses the membrane as a helical span at residues Phe-182 to Val-202. Residues Ile-203 to Asn-224 are Cytoplasmic-facing. A helical transmembrane segment spans residues Ile-225–Pro-245. At Tyr-246–Glu-268 the chain is on the extracellular side. A helical membrane pass occupies residues Ala-269–Ser-289. The Cytoplasmic segment spans residues Lys-290–Ala-319.

Belongs to the G-protein coupled receptor 1 family. Expressed in both T-cell subsets and natural killer cells, while it is undetectable in B cells or CD14(+) monocytes. Expressed in peripheral blood mononuclear cells (PBMC) and Jurkat cells (at protein level).

It localises to the cell membrane. In terms of biological role, G-protein coupled receptor for Big LEN, a 16-amino acid neuropeptide produced from the precursor protein, proSAAS (encoded by PCSK1N). Acts through a G(i)-alpha-mediated pathway in response to Big LEN. Big LEN-GPR171 system plays an important role in regulating feeding and metabolism. Also plays a role in modulating fear and anxiety-like behaviors in the basolateral amygdala. Big LEN-GPR171 modulates the mu-type opioid receptor signaling and antinociception. Acts as a negative regulator T cell function. The chain is G-protein coupled receptor 171 from Homo sapiens (Human).